A 236-amino-acid polypeptide reads, in one-letter code: Small ribosomal subunit protein uS3 (236 aa).

The region spanning 39-107 is the KH type-2 domain; the sequence is IREVLEKQLK…EVHLNIVEVR (69 aa). The interval 214–236 is disordered; it reads ASERRALEGGDSGGGRSRRDDRG.

The protein belongs to the universal ribosomal protein uS3 family. As to quaternary structure, part of the 30S ribosomal subunit. Forms a tight complex with proteins S10 and S14.

Its function is as follows. Binds the lower part of the 30S subunit head. Binds mRNA in the 70S ribosome, positioning it for translation. In Parvibaculum lavamentivorans (strain DS-1 / DSM 13023 / NCIMB 13966), this protein is Small ribosomal subunit protein uS3.